A 501-amino-acid polypeptide reads, in one-letter code: Glycerol kinase 1 (501 aa).

Thr-16 contacts ADP. ATP contacts are provided by Thr-16, Thr-17, and Ser-18. Thr-16 serves as a coordination point for sn-glycerol 3-phosphate. Position 20 (Arg-20) interacts with ADP. Sn-glycerol 3-phosphate contacts are provided by Arg-84, Glu-85, Tyr-135, and Asp-242. Glycerol is bound by residues Arg-84, Glu-85, Tyr-135, Asp-242, and Gln-243. 2 residues coordinate ADP: Thr-264 and Gly-307. ATP is bound by residues Thr-264, Gly-307, Gln-311, and Gly-408. Gly-408 lines the ADP pocket.

It belongs to the FGGY kinase family.

It catalyses the reaction glycerol + ATP = sn-glycerol 3-phosphate + ADP + H(+). It functions in the pathway polyol metabolism; glycerol degradation via glycerol kinase pathway; sn-glycerol 3-phosphate from glycerol: step 1/1. Functionally, key enzyme in the regulation of glycerol uptake and metabolism. Catalyzes the phosphorylation of glycerol to yield sn-glycerol 3-phosphate. In Saccharolobus solfataricus (strain ATCC 35092 / DSM 1617 / JCM 11322 / P2) (Sulfolobus solfataricus), this protein is Glycerol kinase 1.